The sequence spans 476 residues: Adenylosuccinate synthetase, chloroplastic (476 aa).

Low complexity predominate over residues 1-20; the sequence is AAAAAGRGRSFSPAAPAPSS. A disordered region spans residues 1 to 34; the sequence is AAAAAGRGRSFSPAAPAPSSVRLPGRQAPAPAAA. GTP contacts are provided by residues 63–69 and 91–93; these read GDEGKGK and GHT. Aspartate 64 serves as the catalytic Proton acceptor. Mg(2+) is bound by residues aspartate 64 and glycine 91. Residues 64–67, 89–92, threonine 181, arginine 195, glutamine 275, threonine 290, and arginine 354 each bind IMP; these read DEGK and NAGH. The active-site Proton donor is the histidine 92. Residue 350–356 coordinates substrate; sequence TTTGRPR. GTP-binding positions include arginine 356, 382-384, and 465-467; these read KLD and GVG.

This sequence belongs to the adenylosuccinate synthetase family. In terms of assembly, homodimer. The cofactor is Mg(2+).

The protein localises to the plastid. Its subcellular location is the chloroplast. The enzyme catalyses IMP + L-aspartate + GTP = N(6)-(1,2-dicarboxyethyl)-AMP + GDP + phosphate + 2 H(+). Its pathway is purine metabolism; AMP biosynthesis via de novo pathway; AMP from IMP: step 1/2. Plays an important role in the de novo pathway and in the salvage pathway of purine nucleotide biosynthesis. Catalyzes the first committed step in the biosynthesis of AMP from IMP. The polypeptide is Adenylosuccinate synthetase, chloroplastic (Triticum aestivum (Wheat)).